The following is an 89-amino-acid chain: Small ribosomal subunit protein uS14 (89 aa).

It belongs to the universal ribosomal protein uS14 family. Part of the 30S ribosomal subunit. Contacts proteins S3 and S10.

Its function is as follows. Binds 16S rRNA, required for the assembly of 30S particles and may also be responsible for determining the conformation of the 16S rRNA at the A site. This is Small ribosomal subunit protein uS14 from Pelodictyon phaeoclathratiforme (strain DSM 5477 / BU-1).